A 180-amino-acid chain; its full sequence is ATP synthase subunit delta (180 aa).

This sequence belongs to the ATPase delta chain family. As to quaternary structure, F-type ATPases have 2 components, F(1) - the catalytic core - and F(0) - the membrane proton channel. F(1) has five subunits: alpha(3), beta(3), gamma(1), delta(1), epsilon(1). F(0) has three main subunits: a(1), b(2) and c(10-14). The alpha and beta chains form an alternating ring which encloses part of the gamma chain. F(1) is attached to F(0) by a central stalk formed by the gamma and epsilon chains, while a peripheral stalk is formed by the delta and b chains.

The protein resides in the cell membrane. F(1)F(0) ATP synthase produces ATP from ADP in the presence of a proton or sodium gradient. F-type ATPases consist of two structural domains, F(1) containing the extramembraneous catalytic core and F(0) containing the membrane proton channel, linked together by a central stalk and a peripheral stalk. During catalysis, ATP synthesis in the catalytic domain of F(1) is coupled via a rotary mechanism of the central stalk subunits to proton translocation. Functionally, this protein is part of the stalk that links CF(0) to CF(1). It either transmits conformational changes from CF(0) to CF(1) or is implicated in proton conduction. The sequence is that of ATP synthase subunit delta from Dehalococcoides mccartyi (strain ATCC BAA-2100 / JCM 16839 / KCTC 5957 / BAV1).